Here is a 248-residue protein sequence, read N- to C-terminus: Carbohydrate deacetylase (248 aa).

His59 and His121 together coordinate Mg(2+).

The protein belongs to the YdjC deacetylase family. Mg(2+) serves as cofactor.

Functionally, probably catalyzes the deacetylation of acetylated carbohydrates an important step in the degradation of oligosaccharides. In Brevibacillus brevis (strain 47 / JCM 6285 / NBRC 100599), this protein is Carbohydrate deacetylase.